A 271-amino-acid polypeptide reads, in one-letter code: Pyrroline-5-carboxylate reductase (271 aa).

This sequence belongs to the pyrroline-5-carboxylate reductase family.

The protein localises to the cytoplasm. The catalysed reaction is L-proline + NADP(+) = (S)-1-pyrroline-5-carboxylate + NADPH + 2 H(+). It carries out the reaction L-proline + NAD(+) = (S)-1-pyrroline-5-carboxylate + NADH + 2 H(+). The protein operates within amino-acid biosynthesis; L-proline biosynthesis; L-proline from L-glutamate 5-semialdehyde: step 1/1. Functionally, catalyzes the reduction of 1-pyrroline-5-carboxylate (PCA) to L-proline. This chain is Pyrroline-5-carboxylate reductase, found in Staphylococcus haemolyticus (strain JCSC1435).